The following is a 58-amino-acid chain: MSKFYKIWMIFDPRRVFVAQGVFLFLLAVMIHLILLSTPSYNWLEISAAKYNRVAVAE.

The Cytoplasmic portion of the chain corresponds to Met-1–Arg-15. A helical membrane pass occupies residues Val-16 to Leu-36. His-32 serves as a coordination point for a bacteriochlorophyll. Topologically, residues Ser-37–Glu-58 are periplasmic.

It belongs to the antenna complex alpha subunit family. In terms of assembly, the core complex is formed by different alpha and beta chains, binding bacteriochlorophyll molecules, and arranged most probably in tetrameric structures disposed around the reaction center. The non-pigmented gamma chains may constitute additional components.

The protein localises to the cell inner membrane. Antenna complexes are light-harvesting systems, which transfer the excitation energy to the reaction centers. This is Light-harvesting protein B-875 alpha chain (pufA) from Cereibacter sphaeroides (strain ATCC 17023 / DSM 158 / JCM 6121 / CCUG 31486 / LMG 2827 / NBRC 12203 / NCIMB 8253 / ATH 2.4.1.) (Rhodobacter sphaeroides).